Here is a 621-residue protein sequence, read N- to C-terminus: Leucine aminopeptidase (621 aa).

Positions Met1–Met73 are excised as a propeptide. A disordered region spans residues Ser129–Gln152. Residues Gly132–Gly150 show a composition bias toward gly residues. A peptide contacts are provided by Lys390, Asp395, and Lys402. Positions 390 and 395 each coordinate Zn(2+). Positions Asn400 to Ser417 are L13 loop. Lys402 is an active-site residue. Asp410, Met412, Asp415, Asp475, and Glu477 together coordinate Zn(2+). A peptide contacts are provided by Asp415 and Asp475. Arg479 is an active-site residue.

This sequence belongs to the peptidase M17 family. Homohexamer composed of dimer of trimers. Both the identity and concentration of metal ions available dictate the extent to which oligomerization occurs; Mn(2+) and Co(2+) induces oligomerization, whereas Mg(2+) has no effect, and Zn(2+) causes irreversible protein aggregation in vitro. Zn(2+) is required as a cofactor.

The protein resides in the cytoplasm. It carries out the reaction Release of an N-terminal amino acid, Xaa-|-Yaa-, in which Xaa is preferably Leu, but may be other amino acids including Pro although not Arg or Lys, and Yaa may be Pro. Amino acid amides and methyl esters are also readily hydrolyzed, but rates on arylamides are exceedingly low.. The enzyme catalyses L-cysteinylglycine + H2O = L-cysteine + glycine. Its activity is regulated as follows. Oligomerization is required for catalytic activity and is metal-dependent. The type of metal that binds the 2 metal binding sites influences catalytic activity and substrate specificity. In vitro, activated by Co(2+), Mn(2+), Ni(2+), Mg(2+) and Zn(2+) with decreasing strength. Occupancy of the site 2 is essential and sufficient for activating the enzyme but occupation of the 2 sites is necessary for full catalytic activity. Inhibited by Ca(2+). Inhibited by fungal metabolite bestatin. Its function is as follows. Aminopeptidase which preferentially cleaves leucine residues from the N-terminus of peptides. Also, has some activity towards tryptophan and methionine and has very low activity towards alanine, arginine, asparagine, phenylalanine and tyrosine. No activity towards histidine, serine, valine, isoleucine, glycine, aspartic acid and glutamic acid. In addition, cleaves the Cys-Gly dipeptide, probably as part of the glutathione regulation pathway; cleavage only occurs in the presence of Mn(2+). Plays a role in the final step of host hemoglobin catabolism, by cleaving hemoglobin-derived oligopeptides providing a source of amino acids for the parasite protein synthesis and for the maintenance of osmotic homeostasis. In Plasmodium vivax (strain Salvador I), this protein is Leucine aminopeptidase.